The sequence spans 163 residues: Large ribosomal subunit protein uL15 (163 aa).

The interval 1-43 (MKLNEIADNEGSRKKRTRVGRGIGSGKGKQSGRGGKGQTARSG) is disordered. Gly residues predominate over residues 21–37 (RGIGSGKGKQSGRGGKG).

This sequence belongs to the universal ribosomal protein uL15 family. Part of the 50S ribosomal subunit.

Functionally, binds to the 23S rRNA. The sequence is that of Large ribosomal subunit protein uL15 from Afipia carboxidovorans (strain ATCC 49405 / DSM 1227 / KCTC 32145 / OM5) (Oligotropha carboxidovorans).